The following is a 193-amino-acid chain: Potassium-transporting ATPase KdpC subunit (193 aa).

A helical transmembrane segment spans residues 7–27 (PLVVIFVVLTAVTGLAYPAVM).

Belongs to the KdpC family. In terms of assembly, the system is composed of three essential subunits: KdpA, KdpB and KdpC.

It localises to the cell inner membrane. Functionally, part of the high-affinity ATP-driven potassium transport (or Kdp) system, which catalyzes the hydrolysis of ATP coupled with the electrogenic transport of potassium into the cytoplasm. This subunit acts as a catalytic chaperone that increases the ATP-binding affinity of the ATP-hydrolyzing subunit KdpB by the formation of a transient KdpB/KdpC/ATP ternary complex. This is Potassium-transporting ATPase KdpC subunit from Burkholderia ambifaria (strain ATCC BAA-244 / DSM 16087 / CCUG 44356 / LMG 19182 / AMMD) (Burkholderia cepacia (strain AMMD)).